A 255-amino-acid chain; its full sequence is DNA repair protein RecO (255 aa).

This sequence belongs to the RecO family.

Its function is as follows. Involved in DNA repair and RecF pathway recombination. The polypeptide is DNA repair protein RecO (Acidithiobacillus ferrooxidans (strain ATCC 23270 / DSM 14882 / CIP 104768 / NCIMB 8455) (Ferrobacillus ferrooxidans (strain ATCC 23270))).